Here is a 123-residue protein sequence, read N- to C-terminus: Large ribosomal subunit protein bL12 (123 aa).

Belongs to the bacterial ribosomal protein bL12 family. As to quaternary structure, homodimer. Part of the ribosomal stalk of the 50S ribosomal subunit. Forms a multimeric L10(L12)X complex, where L10 forms an elongated spine to which 2 to 4 L12 dimers bind in a sequential fashion. Binds GTP-bound translation factors.

In terms of biological role, forms part of the ribosomal stalk which helps the ribosome interact with GTP-bound translation factors. Is thus essential for accurate translation. The protein is Large ribosomal subunit protein bL12 of Bartonella bacilliformis (strain ATCC 35685 / KC583 / Herrer 020/F12,63).